The chain runs to 619 residues: Secretogranin-2 (619 aa).

Residues 1–30 (MTESKAYRFGAVLLLIHLIFLVPGTEAASF) form the signal peptide. The residue at position 153 (Y153) is a Sulfotyrosine. Residues S176 and S270 each carry the phosphoserine modification. The tract at residues 247 to 307 (VGGEDWSPME…RKESKDQLSE (61 aa)) is disordered. Basic and acidic residues-rich tracts occupy residues 255 to 286 (MEEKIETQTQEEVRDSKENTEKNEQINEEMKR) and 295 to 307 (EGNRKESKDQLSE). A phosphoserine mark is found at S434, S534, S557, and S558.

The protein belongs to the chromogranin/secretogranin protein family. As to quaternary structure, interacts with Secretogranin III/SCG3. Brain. Expression in the pituitary is restricted to the anterior lobe. Expression in the hypothalamus is observed in the neuronal cells and neurons of arcuate nucleus, supraoptic nucleus and median eminence (at protein level).

It is found in the secreted. Functionally, neuroendocrine protein of the granin family that regulates the biogenesis of secretory granules. This chain is Secretogranin-2 (Scg2), found in Rattus norvegicus (Rat).